Consider the following 220-residue polypeptide: Probable transaldolase (220 aa).

Residue K87 is the Schiff-base intermediate with substrate of the active site.

The protein belongs to the transaldolase family. Type 3B subfamily.

The protein localises to the cytoplasm. It carries out the reaction D-sedoheptulose 7-phosphate + D-glyceraldehyde 3-phosphate = D-erythrose 4-phosphate + beta-D-fructose 6-phosphate. Its pathway is carbohydrate degradation; pentose phosphate pathway; D-glyceraldehyde 3-phosphate and beta-D-fructose 6-phosphate from D-ribose 5-phosphate and D-xylulose 5-phosphate (non-oxidative stage): step 2/3. Its function is as follows. Transaldolase is important for the balance of metabolites in the pentose-phosphate pathway. The chain is Probable transaldolase from Porphyromonas gingivalis (strain ATCC 33277 / DSM 20709 / CIP 103683 / JCM 12257 / NCTC 11834 / 2561).